The chain runs to 129 residues: MNLIQQLEAEQIAKFKESKSIPDFRPGDTLRVGVKVVEGERTRVQAYEGVCIARANKGMGSSFTVRKISFGEGVERVFPLYSPNVESIEVVRKGVVRRAKLYYLRGRRGKSARIAERRDNKPAAEAQEA.

This sequence belongs to the bacterial ribosomal protein bL19 family.

Functionally, this protein is located at the 30S-50S ribosomal subunit interface and may play a role in the structure and function of the aminoacyl-tRNA binding site. The sequence is that of Large ribosomal subunit protein bL19 from Rhizorhabdus wittichii (strain DSM 6014 / CCUG 31198 / JCM 15750 / NBRC 105917 / EY 4224 / RW1) (Sphingomonas wittichii).